Here is a 238-residue protein sequence, read N- to C-terminus: Capsular polysaccharide phosphotransferase eps5J (238 aa).

It belongs to the stealth family.

This chain is Capsular polysaccharide phosphotransferase eps5J (eps5J), found in Streptococcus thermophilus.